A 394-amino-acid chain; its full sequence is MNKKSIRDVDLKGKRVFCRVDFNVPMKEGKITDETRIRAALPTIQYLVEQGAKVILASHLGRPKGQAVEELRLTPVAARLGELLGKDVKKADEAFGPVAQEMVAAMNEGDVLVLENVRFYAGEEKNDAELAKEFAALADIFVNDAFGAAHRAHASTAGIADYLPAVSGLLMEKELEVLGKALSNPERPFTAIIGGAKVKDKIGLIRHLLDKVDNLIIGGGLAYTFVKALGHEIGLSLCEDDKIELAKEFMQLAKEKGVNFYMPVDVVITEEFSETATTKIVGIDSIPSNWEGVDIGPKTREIYADVIKNSKLVVWNGPMGVFEMTPFAEGTKAVGQALADAEGTYSVIGGGDSAAAVEKFGMADKMSHISTGGGASLEFMEGKELPGVVCLNDK.

Residues 21-23 (DFN), Arg-36, 59-62 (HLGR), Arg-118, and Arg-151 each bind substrate. Ser-183 carries the phosphoserine modification. Residues Lys-201 and Gly-292 each contribute to the ATP site. The residue at position 299 (Thr-299) is a Phosphothreonine. Residues Glu-323 and 350 to 353 (GGDS) each bind ATP.

Belongs to the phosphoglycerate kinase family. As to quaternary structure, monomer.

The protein localises to the cytoplasm. The enzyme catalyses (2R)-3-phosphoglycerate + ATP = (2R)-3-phospho-glyceroyl phosphate + ADP. It participates in carbohydrate degradation; glycolysis; pyruvate from D-glyceraldehyde 3-phosphate: step 2/5. The chain is Phosphoglycerate kinase from Bacillus anthracis (strain A0248).